The following is a 211-amino-acid chain: Uridine kinase (211 aa).

ATP is bound at residue 12–19; it reads GGSGSGKT.

It belongs to the uridine kinase family.

It localises to the cytoplasm. It carries out the reaction uridine + ATP = UMP + ADP + H(+). The enzyme catalyses cytidine + ATP = CMP + ADP + H(+). The protein operates within pyrimidine metabolism; CTP biosynthesis via salvage pathway; CTP from cytidine: step 1/3. It participates in pyrimidine metabolism; UMP biosynthesis via salvage pathway; UMP from uridine: step 1/1. The chain is Uridine kinase from Bacillus licheniformis (strain ATCC 14580 / DSM 13 / JCM 2505 / CCUG 7422 / NBRC 12200 / NCIMB 9375 / NCTC 10341 / NRRL NRS-1264 / Gibson 46).